The primary structure comprises 307 residues: Recombination-associated protein RdgC (307 aa).

Belongs to the RdgC family.

The protein localises to the cytoplasm. The protein resides in the nucleoid. Functionally, may be involved in recombination. The protein is Recombination-associated protein RdgC of Burkholderia orbicola (strain MC0-3).